A 210-amino-acid polypeptide reads, in one-letter code: CKLF-like MARVEL transmembrane domain-containing protein 2B (210 aa).

A run of 4 helical transmembrane segments spans residues 35-55 (FWAQ…IAAM), 65-85 (PIVI…FFLY), 103-123 (LMND…ALEA), and 127-147 (LPVP…ISII). The MARVEL domain occupies 35–157 (FWAQGHAECK…DLCLQRRQFK (123 aa)).

It belongs to the chemokine-like factor family.

It is found in the membrane. The sequence is that of CKLF-like MARVEL transmembrane domain-containing protein 2B (Cmtm2b) from Mus musculus (Mouse).